A 573-amino-acid chain; its full sequence is NEDD4-binding protein 3-B (573 aa).

Disordered regions lie at residues 119–138 (EFSK…RFGP), 173–220 (CVGS…NSYS), and 384–405 (GENE…NLED). The span at 125–135 (LPERGHSDKSR) shows a compositional bias: basic and acidic residues. Low complexity predominate over residues 186–196 (SNSHSNNPSES). 2 stretches are compositionally biased toward polar residues: residues 207–220 (DSKQ…NSYS) and 392–401 (KQSQSDNSGP). Positions 287-474 (ESVEDVARQL…CLQALEDVKS (188 aa)) form a coiled coil.

The protein belongs to the N4BP3 family.

The protein localises to the cytoplasmic vesicle. Its subcellular location is the cell projection. It is found in the axon. The protein resides in the dendrite. Its function is as follows. Plays a role in axon and dendrite arborization during cranial nerve development. Also important for neural crest migration and early development of other anterior structures including eye, brain and cranial cartilage. This chain is NEDD4-binding protein 3-B, found in Xenopus laevis (African clawed frog).